We begin with the raw amino-acid sequence, 301 residues long: Probable 5-dehydro-4-deoxyglucarate dehydratase (301 aa).

It belongs to the DapA family.

The catalysed reaction is 5-dehydro-4-deoxy-D-glucarate + H(+) = 2,5-dioxopentanoate + CO2 + H2O. It participates in carbohydrate acid metabolism; D-glucarate degradation; 2,5-dioxopentanoate from D-glucarate: step 2/2. The chain is Probable 5-dehydro-4-deoxyglucarate dehydratase from Cereibacter sphaeroides (strain KD131 / KCTC 12085) (Rhodobacter sphaeroides).